A 310-amino-acid chain; its full sequence is B3 domain-containing transcription factor NGA1 (310 aa).

Residues 1-26 (MMTDLSLTRDEDEEEAKPLAEEEGAR) form a disordered region. Basic and acidic residues predominate over residues 16-26 (AKPLAEEEGAR). The TF-B3 DNA-binding region spans 35–141 (FDKVVTPSDV…RLFIDWRRRP (107 aa)). Residues 251-268 (ESGMTNSTEEESSSSGGS) show a composition bias toward low complexity. Positions 251–310 (ESGMTNSTEEESSSSGGSLPRGGGGGASSSSFFQLRLGSSSEDDHFTKKGKSSLSFDLDQ) are disordered.

In terms of assembly, interacts with BRX. Interacts with BZIP30.

The protein resides in the nucleus. In terms of biological role, regulates lateral organ growth. Functionally redundant with NGA2, NGA3 and NGA4. The polypeptide is B3 domain-containing transcription factor NGA1 (NGA1) (Arabidopsis thaliana (Mouse-ear cress)).